Consider the following 219-residue polypeptide: Thiamine-phosphate synthase (219 aa).

4-amino-2-methyl-5-(diphosphooxymethyl)pyrimidine contacts are provided by residues 48–52 and N84; that span reads QFRQK. D85 and D104 together coordinate Mg(2+). S123 contributes to the 4-amino-2-methyl-5-(diphosphooxymethyl)pyrimidine binding site. 150–152 provides a ligand contact to 2-[(2R,5Z)-2-carboxy-4-methylthiazol-5(2H)-ylidene]ethyl phosphate; that stretch reads TPS. K153 lines the 4-amino-2-methyl-5-(diphosphooxymethyl)pyrimidine pocket. Residues G181 and 199 to 200 contribute to the 2-[(2R,5Z)-2-carboxy-4-methylthiazol-5(2H)-ylidene]ethyl phosphate site; that span reads IS.

This sequence belongs to the thiamine-phosphate synthase family. Mg(2+) is required as a cofactor.

The enzyme catalyses 2-[(2R,5Z)-2-carboxy-4-methylthiazol-5(2H)-ylidene]ethyl phosphate + 4-amino-2-methyl-5-(diphosphooxymethyl)pyrimidine + 2 H(+) = thiamine phosphate + CO2 + diphosphate. The catalysed reaction is 2-(2-carboxy-4-methylthiazol-5-yl)ethyl phosphate + 4-amino-2-methyl-5-(diphosphooxymethyl)pyrimidine + 2 H(+) = thiamine phosphate + CO2 + diphosphate. It carries out the reaction 4-methyl-5-(2-phosphooxyethyl)-thiazole + 4-amino-2-methyl-5-(diphosphooxymethyl)pyrimidine + H(+) = thiamine phosphate + diphosphate. The protein operates within cofactor biosynthesis; thiamine diphosphate biosynthesis; thiamine phosphate from 4-amino-2-methyl-5-diphosphomethylpyrimidine and 4-methyl-5-(2-phosphoethyl)-thiazole: step 1/1. Its function is as follows. Condenses 4-methyl-5-(beta-hydroxyethyl)thiazole monophosphate (THZ-P) and 2-methyl-4-amino-5-hydroxymethyl pyrimidine pyrophosphate (HMP-PP) to form thiamine monophosphate (TMP). The polypeptide is Thiamine-phosphate synthase (Helicobacter pylori (strain ATCC 700392 / 26695) (Campylobacter pylori)).